The following is a 78-amino-acid chain: Esculentin-2ISa (78 aa).

The N-terminal stretch at 1-22 (MFTLKKSLLLLFFLGTISLSVC) is a signal peptide. Residues 23–39 (KQERDADYEDKGEVEEV) constitute a propeptide, removed in mature form. Cys72 and Cys78 are joined by a disulfide.

As to expression, expressed by the skin glands.

It localises to the secreted. In terms of biological role, has antimicrobial activity against Gram-negative bacterium E.coli ATCC 8739 (MIC=12.5 ug), against Gram positive bacteria S.aureus ATCC 6538 (MIC=3.1 ug), methicillin-resistant S.aureus ATCC 43300 (MIC=25 ug), B.subtilis ATCC 6633 (MIC=6.3 ug) and against fungus C.albicans ATCC 90028 (MIC=100 ug). In Odorrana ishikawae (Ishikawa's frog), this protein is Esculentin-2ISa.